Reading from the N-terminus, the 471-residue chain is Tryptophanase (471 aa).

3 positions are modified to N6-acetyllysine: K5, K115, and K156. K270 is modified (N6-(pyridoxal phosphate)lysine). K450 carries the post-translational modification N6-acetyllysine.

This sequence belongs to the beta-eliminating lyase family. As to quaternary structure, homotetramer. The cofactor is pyridoxal 5'-phosphate.

It catalyses the reaction L-tryptophan + H2O = indole + pyruvate + NH4(+). It participates in amino-acid degradation; L-tryptophan degradation via pyruvate pathway; indole and pyruvate from L-tryptophan: step 1/1. The protein is Tryptophanase (tnaA) of Escherichia coli O157:H7.